We begin with the raw amino-acid sequence, 250 residues long: Hydroxyacylglutathione hydrolase (250 aa).

Zn(2+) contacts are provided by histidine 53, histidine 55, aspartate 57, histidine 58, histidine 110, aspartate 127, and histidine 165.

This sequence belongs to the metallo-beta-lactamase superfamily. Glyoxalase II family. Monomer. Zn(2+) is required as a cofactor.

The catalysed reaction is an S-(2-hydroxyacyl)glutathione + H2O = a 2-hydroxy carboxylate + glutathione + H(+). Its pathway is secondary metabolite metabolism; methylglyoxal degradation; (R)-lactate from methylglyoxal: step 2/2. Its function is as follows. Thiolesterase that catalyzes the hydrolysis of S-D-lactoyl-glutathione to form glutathione and D-lactic acid. This chain is Hydroxyacylglutathione hydrolase, found in Photorhabdus laumondii subsp. laumondii (strain DSM 15139 / CIP 105565 / TT01) (Photorhabdus luminescens subsp. laumondii).